A 738-amino-acid chain; its full sequence is DNA ligase (738 aa).

Residues 48–52, 97–98, and glutamate 136 contribute to the NAD(+) site; these read DVVYD and SL. The N6-AMP-lysine intermediate role is filled by lysine 138. The NAD(+) site is built by arginine 159, glutamate 196, lysine 356, and lysine 380. Zn(2+)-binding residues include cysteine 474, cysteine 477, cysteine 492, and cysteine 497. The 80-residue stretch at 659-738 folds into the BRCT domain; sequence QLPQPLAGKT…SQLLELLEET (80 aa).

The protein belongs to the NAD-dependent DNA ligase family. LigA subfamily. The cofactor is Mg(2+). Mn(2+) is required as a cofactor.

It catalyses the reaction NAD(+) + (deoxyribonucleotide)n-3'-hydroxyl + 5'-phospho-(deoxyribonucleotide)m = (deoxyribonucleotide)n+m + AMP + beta-nicotinamide D-nucleotide.. In terms of biological role, DNA ligase that catalyzes the formation of phosphodiester linkages between 5'-phosphoryl and 3'-hydroxyl groups in double-stranded DNA using NAD as a coenzyme and as the energy source for the reaction. It is essential for DNA replication and repair of damaged DNA. This Cyanothece sp. (strain PCC 7425 / ATCC 29141) protein is DNA ligase.